A 339-amino-acid polypeptide reads, in one-letter code: Phenylalanine--tRNA ligase alpha subunit (339 aa).

Glu-253 serves as a coordination point for Mg(2+).

The protein belongs to the class-II aminoacyl-tRNA synthetase family. Phe-tRNA synthetase alpha subunit type 1 subfamily. As to quaternary structure, tetramer of two alpha and two beta subunits. Mg(2+) serves as cofactor.

The protein localises to the cytoplasm. It catalyses the reaction tRNA(Phe) + L-phenylalanine + ATP = L-phenylalanyl-tRNA(Phe) + AMP + diphosphate + H(+). In Alcanivorax borkumensis (strain ATCC 700651 / DSM 11573 / NCIMB 13689 / SK2), this protein is Phenylalanine--tRNA ligase alpha subunit.